We begin with the raw amino-acid sequence, 517 residues long: PSTB2-interacting protein 1 (517 aa).

In terms of assembly, interacts with PDR17/PSTB2 and SCS2.

Functionally, phosphatidic acid-binding protein involved in interorganelle phosphatidylserine (PtdSer) transport. Linkks a PtdSer donor membrane (via binding of SCS2 and phosphatidic acid present in the donor membrane) with an acceptor membrane (via its interaction with PDR17), forming a zone of apposition that facilitates PtdSer transfer. The sequence is that of PSTB2-interacting protein 1 from Saccharomyces cerevisiae (strain ATCC 204508 / S288c) (Baker's yeast).